An 80-amino-acid polypeptide reads, in one-letter code: Exodeoxyribonuclease 7 small subunit (80 aa).

This sequence belongs to the XseB family. Heterooligomer composed of large and small subunits.

It is found in the cytoplasm. It catalyses the reaction Exonucleolytic cleavage in either 5'- to 3'- or 3'- to 5'-direction to yield nucleoside 5'-phosphates.. Bidirectionally degrades single-stranded DNA into large acid-insoluble oligonucleotides, which are then degraded further into small acid-soluble oligonucleotides. In Pseudomonas fluorescens (strain ATCC BAA-477 / NRRL B-23932 / Pf-5), this protein is Exodeoxyribonuclease 7 small subunit.